The sequence spans 452 residues: GTPase Der (452 aa).

2 EngA-type G domains span residues 4–169 and 177–352; these read PVVA…PPAA and IKVA…ESHR. GTP contacts are provided by residues 10-17, 57-61, 120-123, 183-190, 230-234, and 295-298; these read GRPNVGKS, DTGGL, NKCE, DTAGI, and NKWD. Residues 353 to 438 form the KH-like domain; that stretch reads RRVSTSVIND…PIRLIWRGKP (86 aa).

The protein belongs to the TRAFAC class TrmE-Era-EngA-EngB-Septin-like GTPase superfamily. EngA (Der) GTPase family. Associates with the 50S ribosomal subunit.

Its function is as follows. GTPase that plays an essential role in the late steps of ribosome biogenesis. The polypeptide is GTPase Der (Microcystis aeruginosa (strain NIES-843 / IAM M-2473)).